Consider the following 336-residue polypeptide: Ferrochelatase (336 aa).

Residues H206 and E287 each contribute to the Fe cation site.

Belongs to the ferrochelatase family.

The protein resides in the cytoplasm. It catalyses the reaction heme b + 2 H(+) = protoporphyrin IX + Fe(2+). It functions in the pathway porphyrin-containing compound metabolism; protoheme biosynthesis; protoheme from protoporphyrin-IX: step 1/1. Functionally, catalyzes the ferrous insertion into protoporphyrin IX. This Neisseria gonorrhoeae (strain ATCC 700825 / FA 1090) protein is Ferrochelatase.